A 269-amino-acid polypeptide reads, in one-letter code: Transcription factor MYB7 (269 aa).

HTH myb-type domains lie at 9 to 61 (KEHM…INYL) and 62 to 116 (RPDL…KRKL). 2 consecutive DNA-binding regions (H-T-H motif) follow at residues 37 to 61 (WRSL…INYL) and 89 to 112 (WSLI…NTHI).

In terms of assembly, interacts with SAD2. As to expression, expressed in anthers. Expressed in pollen grains and mature seeds. Expressed in roots and vasculature of leaves.

Its subcellular location is the nucleus. Functionally, transcription factor involved in the negative regulation of flavonol biosynthesis. Represses the early phenylpropanoid genes, phenylalanine ammonia-lyase (PAL), cinnamate 4-hydroxylase (C4H) and 4-coumarate-CoA ligase (4CL), as well as the flavonoid-specific genes, flavonoid 3'-hydroxylase (F3'H) and dihydroflavonol 4-reductase (DFR). Plays a role in seed germination inhibition. Negatively regulates the expression of the abscisic acid (ABA) signaling transcription factor ABI5 in seeds. This Arabidopsis thaliana (Mouse-ear cress) protein is Transcription factor MYB7.